A 796-amino-acid chain; its full sequence is Protein SEY1 homolog (796 aa).

Residues 1–701 are Cytoplasmic-facing; that stretch reads MESSNDFSNK…AGTSISSWRN (701 aa). The 235-residue stretch at 46 to 280 folds into the GB1/RHD3-type G domain; it reads GFRFNVVTIL…VPSDGFFVYS (235 aa). Position 56–63 (56–63) interacts with GTP; the sequence is GSQSSGKS. Residues 554–626 adopt a coiled-coil conformation; it reads SLVLLLKAAR…DALTLLKVLK (73 aa). Residues 702 to 722 form a helical membrane-spanning segment; the sequence is IPPIFWLVLLVLGWNELRSVF. Topologically, residues 723 to 725 are lumenal; that stretch reads KVL. Residues 726–746 traverse the membrane as a helical segment; it reads LRFYVVIPLLIVFYFTFSYSA. Residues 747 to 796 lie on the Cytoplasmic side of the membrane; it reads TKLLGPKADQYVKPVRDKVLSLFTALLAWFVRTLHMIASKSSSFKQRPAT.

Belongs to the TRAFAC class dynamin-like GTPase superfamily. GB1/RHD3 GTPase family. RHD3 subfamily.

The protein localises to the endoplasmic reticulum membrane. Functionally, probable GTP-binding protein that may be involved in cell development. In Theileria parva (East coast fever infection agent), this protein is Protein SEY1 homolog.